The primary structure comprises 267 residues: 27 kDa primary mesenchyme-specific spicule protein (267 aa).

Residues 1 to 16 (MKLLAILLVLPALCFG) form the signal peptide. An 11 X 4 AA tandem repeats of G-[PQ]-G-[MQ] region spans residues 20-64 (EGPGMGPGMGPGMGPGMGPGMGPGMGPGMGPGMGPGQGQGQGQGQ). Repeat copies occupy residues 21–24 (GPGM), 25–28 (GPGM), 29–32 (GPGM), 33–36 (GPGM), 37–40 (GPGM), 41–44 (GPGM), 45–48 (GPGM), 49–52 (GPGM), 53–56 (GPGQ), 57–60 (GQGQ), and 61–64 (GQGQ). Residues 44 to 68 (MGPGMGPGMGPGQGQGQGQGQGQVG) are disordered. The region spanning 79–220 (IGQQCFKMMS…CDEPMYFACS (142 aa)) is the C-type lectin domain. Cystine bridges form between Cys-100–Cys-219 and Cys-197–Cys-211.

As to expression, expressed specifically in the micromere/primary mesenchyme cells (PMC) lineage. Produced uniformly and exclusively by PMCs through the early prism stage and this specificity is further restricted during skeletogenesis to a subpopulation of PMCs associated with the growing tips of the spicules.

The protein resides in the secreted. In terms of biological role, may play a role in the regulation or execution of skeletal growth. This is 27 kDa primary mesenchyme-specific spicule protein (PM27) from Strongylocentrotus purpuratus (Purple sea urchin).